The primary structure comprises 249 residues: UDP-N-acetyl-D-mannosaminuronic acid transferase (249 aa).

Belongs to the glycosyltransferase 26 family.

It catalyses the reaction UDP-N-acetyl-alpha-D-mannosaminouronate + N-acetyl-alpha-D-glucosaminyl-di-trans,octa-cis-undecaprenyl diphosphate = beta-D-ManNAcA-(1-&gt;4)-alpha-D-GlcNAc-di-trans,octa-cis-undecaprenyl diphosphate + UDP + H(+). Its pathway is bacterial outer membrane biogenesis; enterobacterial common antigen biosynthesis. In terms of biological role, catalyzes the synthesis of Und-PP-GlcNAc-ManNAcA (Lipid II), the second lipid-linked intermediate involved in enterobacterial common antigen (ECA) synthesis. The chain is UDP-N-acetyl-D-mannosaminuronic acid transferase from Pectobacterium carotovorum subsp. carotovorum (strain PC1).